The following is a 252-amino-acid chain: DNA-(apurinic or apyrimidinic site) lyase Nei2 (252 aa).

Pro-2 functions as the Schiff-base intermediate with DNA in the catalytic mechanism. Glu-3 serves as the catalytic Proton donor. Residue Lys-51 is the Proton donor (in beta-elimination) of the active site. The FPG-type zinc-finger motif lies at 216-250 (WVYGRAGEPCRRCGTLIQTDRGGERVTYWCPVCQT). The Zn(2+) site is built by Cys-225, Cys-228, Cys-245, and Cys-248.

This sequence belongs to the FPG family. Monomer. It depends on Zn(2+) as a cofactor.

It carries out the reaction 2'-deoxyribonucleotide-(2'-deoxyribose 5'-phosphate)-2'-deoxyribonucleotide-DNA = a 3'-end 2'-deoxyribonucleotide-(2,3-dehydro-2,3-deoxyribose 5'-phosphate)-DNA + a 5'-end 5'-phospho-2'-deoxyribonucleoside-DNA + H(+). Involved in base excision repair of DNA damaged by oxidation or by mutagenic agents. Acts as DNA glycosylase that recognizes and removes damaged bases. Its function is as follows. Involved in the repair of psoralen-UVA DNA cross-links. A lyase that cleaves single-stranded (ss)DNA but not double-stranded (ds)DNA with an abasic site. Has 5-hydroxyuracil (5-OH-U) glycosylase activity on ssDNA with 5-OH-U, with 10-fold less activity on dsDNA, but weak to no uracil glycosylase activity. Has weak glycosylase activity on thymine glycol and dihydrothymine residues in ssDNA. Cleaves the DNA backbone by beta-delta elimination to generate a single-strand break at the site of the removed base with both 3'- and 5'-phosphates. The polypeptide is DNA-(apurinic or apyrimidinic site) lyase Nei2 (Mycolicibacterium smegmatis (strain ATCC 700084 / mc(2)155) (Mycobacterium smegmatis)).